A 431-amino-acid chain; its full sequence is Histidine--tRNA ligase (431 aa).

The protein belongs to the class-II aminoacyl-tRNA synthetase family. In terms of assembly, homodimer.

The protein resides in the cytoplasm. The catalysed reaction is tRNA(His) + L-histidine + ATP = L-histidyl-tRNA(His) + AMP + diphosphate + H(+). The protein is Histidine--tRNA ligase of Neisseria gonorrhoeae (strain ATCC 700825 / FA 1090).